A 79-amino-acid chain; its full sequence is Small ribosomal subunit protein bS16 (79 aa).

Belongs to the bacterial ribosomal protein bS16 family.

The sequence is that of Small ribosomal subunit protein bS16 from Nitratidesulfovibrio vulgaris (strain DSM 19637 / Miyazaki F) (Desulfovibrio vulgaris).